Consider the following 542-residue polypeptide: Chaperonin GroEL (542 aa).

Residues 29–32 (TMGP), Lys50, 86–90 (DGTTT), Gly414, 477–479 (NAA), and Asp493 each bind ATP.

It belongs to the chaperonin (HSP60) family. As to quaternary structure, forms a cylinder of 14 subunits composed of two heptameric rings stacked back-to-back. Interacts with the co-chaperonin GroES.

It is found in the cytoplasm. The enzyme catalyses ATP + H2O + a folded polypeptide = ADP + phosphate + an unfolded polypeptide.. In terms of biological role, together with its co-chaperonin GroES, plays an essential role in assisting protein folding. The GroEL-GroES system forms a nano-cage that allows encapsulation of the non-native substrate proteins and provides a physical environment optimized to promote and accelerate protein folding. This is Chaperonin GroEL from Sulfurimonas denitrificans (strain ATCC 33889 / DSM 1251) (Thiomicrospira denitrificans (strain ATCC 33889 / DSM 1251)).